The sequence spans 388 residues: Beta-1,4-galactosyltransferase 5 (388 aa).

Residues 1–14 lie on the Cytoplasmic side of the membrane; the sequence is MRVRRGLLRLPRRS. Residues 15 to 35 traverse the membrane as a helical; Signal-anchor for type II membrane protein segment; sequence LLAALFFFSLSSSLLYFVYVA. The Lumenal portion of the chain corresponds to 36-388; the sequence is PGIVNTYLFM…TPELAQVTEY (353 aa). N77, N81, N90, N111, and N128 each carry an N-linked (GlcNAc...) asparagine glycan. A disulfide bond links C114 and C158. Residues 169 to 173, 208 to 210, 235 to 236, Y264, and W296 each bind UDP-alpha-D-galactose; these read PFRNR, FNR, and VD. C229 and C248 are joined by a disulfide. Residue D236 coordinates Mn(2+). 298 to 301 contributes to the N-acetyl-D-glucosamine binding site; sequence GEDD. Residue 329–330 coordinates UDP-alpha-D-galactose; it reads YH. R340 provides a ligand contact to N-acetyl-D-glucosamine. N-linked (GlcNAc...) asparagine glycans are attached at residues N364 and N373.

The protein belongs to the glycosyltransferase 7 family. As to quaternary structure, (Microbial infection) Interacts with porcine reproductive and respiratory syndrome virus GP5. Requires Mn(2+) as cofactor.

The protein localises to the golgi apparatus. It is found in the golgi stack membrane. The enzyme catalyses a beta-D-glucosyl-(1&lt;-&gt;1')-N-acylsphing-4-enine + UDP-alpha-D-galactose = a beta-D-Gal-(1-&gt;4)-beta-D-Glc-(1&lt;-&gt;1)-Cer(d18:1(4E)) + UDP + H(+). It participates in protein modification; protein glycosylation. Its pathway is sphingolipid metabolism. In terms of biological role, catalyzes the synthesis of lactosylceramide (LacCer) via the transfer of galactose from UDP-galactose to glucosylceramide (GlcCer). LacCer is the starting point in the biosynthesis of all gangliosides (membrane-bound glycosphingolipids) which play pivotal roles in the CNS including neuronal maturation and axonal and myelin formation. Plays a role in the glycosylation of BMPR1A and regulation of its protein stability. Essential for extraembryonic development during early embryogenesis. Its function is as follows. (Microbial infection) May play a role in the glycosylation of porcine reproductive and respiratory syndrome virus GP5 protein and may be involved in the regulation of viral proliferation. The sequence is that of Beta-1,4-galactosyltransferase 5 (B4GALT5) from Sus scrofa (Pig).